The primary structure comprises 319 residues: Probable NAD(P)H-dependent D-xylose reductase xyl1 (319 aa).

Catalysis depends on tyrosine 50, which acts as the Proton donor. Histidine 112 serves as a coordination point for substrate. NAD(+)-binding positions include 166-167 (SN), 215-224 (SSFGPLSFLE), and 271-281 (KSNNPARLLQN).

This sequence belongs to the aldo/keto reductase family.

It carries out the reaction xylitol + NAD(+) = D-xylose + NADH + H(+). It catalyses the reaction xylitol + NADP(+) = D-xylose + NADPH + H(+). It participates in carbohydrate metabolism; D-xylose degradation. Catalyzes the initial reaction in the xylose utilization pathway by reducing D-xylose into xylitol. Xylose is a major component of hemicelluloses such as xylan. Most fungi utilize D-xylose via three enzymatic reactions, xylose reductase (XR), xylitol dehydrogenase (XDH), and xylulokinase, to form xylulose 5-phosphate, which enters pentose phosphate pathway. In Emericella nidulans (strain FGSC A4 / ATCC 38163 / CBS 112.46 / NRRL 194 / M139) (Aspergillus nidulans), this protein is Probable NAD(P)H-dependent D-xylose reductase xyl1 (xyl1).